We begin with the raw amino-acid sequence, 139 residues long: Large ribosomal subunit protein bL9m (139 aa).

The tract at residues aspartate 83–glycine 121 is disordered.

This sequence belongs to the bacterial ribosomal protein bL9 family. As to quaternary structure, component of the mitochondrial large ribosomal subunit (mt-LSU). Mature yeast 74S mitochondrial ribosomes consist of a small (37S) and a large (54S) subunit. The 37S small subunit contains a 15S ribosomal RNA (15S mt-rRNA) and 34 different proteins. The 54S large subunit contains a 21S rRNA (21S mt-rRNA) and 46 different proteins.

The protein resides in the mitochondrion. Component of the mitochondrial ribosome (mitoribosome), a dedicated translation machinery responsible for the synthesis of mitochondrial genome-encoded proteins, including at least some of the essential transmembrane subunits of the mitochondrial respiratory chain. The mitoribosomes are attached to the mitochondrial inner membrane and translation products are cotranslationally integrated into the membrane. This chain is Large ribosomal subunit protein bL9m (MRPL50), found in Saccharomyces cerevisiae (strain ATCC 204508 / S288c) (Baker's yeast).